Consider the following 363-residue polypeptide: Serpentine receptor class T-55 (363 aa).

The first 18 residues, 1-18 (MKLRHFLIFLMLIPISSS), serve as a signal peptide directing secretion. A run of 7 helical transmembrane segments spans residues 70-90 (IYYI…IWVF), 107-127 (VFIG…PGFV), 143-163 (IVGK…AFLG), 187-207 (WLTV…TVLF), 231-251 (FLYF…ACLC), 278-298 (ICIS…FVLP), and 303-323 (FFHV…IMYI).

It belongs to the nematode receptor-like protein srt family.

It is found in the membrane. This chain is Serpentine receptor class T-55 (srt-55), found in Caenorhabditis elegans.